We begin with the raw amino-acid sequence, 43 residues long: Alpha-1-antiproteinase 4 (43 aa).

It belongs to the serpin family. N-glycosylated with carbohydrates having biantennary side chains. As to expression, plasma.

Its subcellular location is the secreted. The protein is Alpha-1-antiproteinase 4 of Equus caballus (Horse).